Consider the following 276-residue polypeptide: Putative metal-binding protein TC_0696 (276 aa).

Positions 1 to 18 (MRLLILLLFSFGIIYSHG) are cleaved as a signal peptide. The a divalent metal cation site is built by H59, H121, H185, and D256.

Belongs to the bacterial solute-binding protein 9 family.

It localises to the periplasm. Functionally, part of an ATP-binding cassette (ABC) transport system involved in metal import. Binds a metal with high affinity and specificity and delivers it to the membrane permease for translocation into the cytoplasm. This chain is Putative metal-binding protein TC_0696, found in Chlamydia muridarum (strain MoPn / Nigg).